Here is a 428-residue protein sequence, read N- to C-terminus: Autophagy-related protein 14 (428 aa).

The stretch at Gln82–Asp143 forms a coiled coil.

Belongs to the ATG14 family. In terms of assembly, component of the autophagy-specific VPS34 PI3-kinase complex I.

The protein localises to the preautophagosomal structure membrane. Its subcellular location is the vacuole membrane. Functionally, required for cytoplasm to vacuole transport (Cvt) and autophagy as a part of the autophagy-specific VPS34 PI3-kinase complex I. This complex is essential to recruit the ATG8-phosphatidylinositol conjugate and the ATG12-ATG5 conjugate to the pre-autophagosomal structure. ATG14 mediates the specific binding of the VPS34 PI3-kinase complex I to the preautophagosomal structure (PAS). Plays a crucial role in hyphal development, conidiogenesis and pathogenicity. Also required for glycogen mobilization, quantity of lipid bodies, and the turgor pressure of appressoria. The protein is Autophagy-related protein 14 of Pyricularia oryzae (strain 70-15 / ATCC MYA-4617 / FGSC 8958) (Rice blast fungus).